We begin with the raw amino-acid sequence, 335 residues long: UDP-N-acetylenolpyruvoylglucosamine reductase 1 (335 aa).

Residues 36 to 202 (RIGGPAAVFA…LEVELLLKPG (167 aa)) enclose the FAD-binding PCMH-type domain. Residue arginine 181 is part of the active site. The active-site Proton donor is the serine 231. The active site involves glutamate 306.

This sequence belongs to the MurB family. The cofactor is FAD.

It is found in the cytoplasm. The catalysed reaction is UDP-N-acetyl-alpha-D-muramate + NADP(+) = UDP-N-acetyl-3-O-(1-carboxyvinyl)-alpha-D-glucosamine + NADPH + H(+). It functions in the pathway cell wall biogenesis; peptidoglycan biosynthesis. Its function is as follows. Cell wall formation. This chain is UDP-N-acetylenolpyruvoylglucosamine reductase 1 (murB1), found in Corynebacterium glutamicum (strain ATCC 13032 / DSM 20300 / JCM 1318 / BCRC 11384 / CCUG 27702 / LMG 3730 / NBRC 12168 / NCIMB 10025 / NRRL B-2784 / 534).